We begin with the raw amino-acid sequence, 110 residues long: Endoribonuclease SymE (110 aa).

The 46-residue stretch at 29 to 74 (SSYPEYTRIPAITLKGQWLEDAGFTTGTQVDVRVMNGCIVLTAQQP) folds into the SpoVT-AbrB domain.

Belongs to the SymE family.

The protein resides in the cytoplasm. Involved in the degradation and recycling of damaged RNA. It is itself a target for degradation by the ATP-dependent protease Lon. The polypeptide is Endoribonuclease SymE (Salmonella choleraesuis (strain SC-B67)).